Here is a 799-residue protein sequence, read N- to C-terminus: RasGAP-activating-like protein 1 (799 aa).

C2 domains follow at residues 1-105 (MAKS…DSWI) and 116-231 (VQGE…NGWF). D21, D27, D74, D76, D82, D149, D155, D202, D204, and D210 together coordinate Ca(2+). The Ras-GAP domain occupies 316-544 (GLAGPFLDYL…SRVRDFLDQL (229 aa)). T400 bears the Phosphothreonine mark. The 108-residue stretch at 565–672 (TIVREGFLLK…WLSALRKASA (108 aa)) folds into the PH domain. The segment at 674–710 (NPGKLVACHPGAFRSGRWTCCLQAERSAAGCSRTHSA) adopts a Btk-type zinc-finger fold. 4 residues coordinate Zn(2+): H682, C693, C694, and C704.

Ca(2+) serves as cofactor.

Probable inhibitory regulator of the Ras-cyclic AMP pathway. Plays a role in dendrite formation by melanocytes. The sequence is that of RasGAP-activating-like protein 1 from Mus musculus (Mouse).